Consider the following 461-residue polypeptide: Metacaspase-1 (461 aa).

Composition is skewed to gly residues over residues 1-21 (MSYP…GYGG), 45-66 (QYGG…GYGP), 74-86 (QYGG…GYGP), and 105-119 (PGGQ…GHPG). The disordered stretch occupies residues 1-154 (MSYPGQGGNT…PQGNQAFGGT (154 aa)). 2 stretches are compositionally biased toward low complexity: residues 121–131 (GNQAPPGQYGQ) and 138–148 (HGNHNMPPQGN). Residues histidine 252 and cysteine 308 contribute to the active site.

The protein belongs to the peptidase C14B family.

Involved in cell death (apoptosis). The sequence is that of Metacaspase-1 (MCA1) from Yarrowia lipolytica (strain CLIB 122 / E 150) (Yeast).